We begin with the raw amino-acid sequence, 43 residues long: MTWINHNTVKIGNQTLHLDTDETYDWRKDDHWIREEPPQASVR.

This is an uncharacterized protein from Bacillus subtilis (strain 168).